The following is a 66-amino-acid chain: Probable Sec-independent protein translocase protein TatE (66 aa).

Residues 1 to 21 traverse the membrane as a helical segment; the sequence is MEGISITKLLVIAVLIVLLFG. The segment at 46–66 is disordered; that stretch reads ETPAAKKSDGVEAAPRVENKE.

The protein belongs to the TatA/E family. TatE subfamily.

It is found in the cell inner membrane. Part of the twin-arginine translocation (Tat) system that transports large folded proteins containing a characteristic twin-arginine motif in their signal peptide across membranes. TatE shares overlapping functions with TatA. This chain is Probable Sec-independent protein translocase protein TatE, found in Edwardsiella ictaluri (strain 93-146).